Reading from the N-terminus, the 817-residue chain is MMKTEPRGPGGPLRSASPHRSAYEAGIQALKPPDAPGPDEAPKGAHHKKYGSNVHRIKSMFLQMGTTAGPSGEAGGGAGLAEAPRASERGVRLSLPRASSLNENVDHSALLKLGTSVSERVSRFDSKPAPSAQPAPPPHPPSRLQETRKLFERSAPAAAGGDKEAAARRLLRQERAGLQDRKLDVVVRFNGSTEALDKLDADAVSPTVSQLSAVFEKADSRTGLHRGPGLPRAAGVPQVNSKLVSKRSRVFQPPPPPPPAPSGDAPAEKERCPAGQQPPQHRVAPARPPPKPREVRKIKPVEVEESGESEAESAPGEVIQAEVTVHAALENGSTVATAASPAPEEPKAQAAPEKEAAAVAPPERGVGNGRAPDVAPEEVDESKKEDFSEADLVDVSAYSGLGEDSAGSALEEDDEDDEEDGEPPYEPESGCVEIPGLSEEEDPAPSRKIHFSTAPIQVFSTYSNEDYDRRNEDVDPMAASAEYELEKRVERLELFPVELEKDSEGLGISIIGMGAGADMGLEKLGIFVKTVTEGGAAHRDGRIQVNDLLVEVDGTSLVGVTQSFAASVLRNTKGRVRFMIGRERPGEQSEVAQLIQQTLEQERWQREMMEQRYAQYGEDDEETGEYATDEDEELSPTFPGGEMAIEVFELAENEDALSPVDMEPEKLVHKFKELQIKHAVTEAEIQQLKRKLQSLEQEKGRWRVEKAQLEQSVEENKERMEKLEGYWGEAQSLCQAVDEHLRETQAQYQALERKYSKAKRLIKDYQQKEIEFLKKETAQRRVLEESELARKEEMDKLLDKISELEGNLQTLRNSNST.

2 actin-binding regions span residues 1-154 and 164-283; these read MMKT…FERS and EAAA…QHRV. Residues 1–165 are disordered; the sequence is MMKTEPRGPG…PAAAGGDKEA (165 aa). 2 positions are modified to phosphoserine: Ser15 and Ser17. Over residues 44 to 58 the composition is skewed to basic residues; sequence GAHHKKYGSNVHRIK. Ser94, Ser100, and Ser116 each carry phosphoserine. The segment at 100–371 is interaction with D(2) dopamine receptor; it reads SLNENVDHSA…PERGVGNGRA (272 aa). Residues 131–141 show a composition bias toward pro residues; that stretch reads SAQPAPPPHPP. Positions 169–255 are interaction with ADRA2A, ADRA2B and ADRA2C; sequence RLLRQERAGL…KRSRVFQPPP (87 aa). Ser192 is subject to Phosphoserine. Thr193 carries the post-translational modification Phosphothreonine. Phosphoserine is present on Ser205. Thr207 bears the Phosphothreonine mark. A disordered region spans residues 216–447; that stretch reads EKADSRTGLH…SEEEDPAPSR (232 aa). The span at 252 to 261 shows a compositional bias: pro residues; the sequence is QPPPPPPPAP. Residues 291–302 are compositionally biased toward basic and acidic residues; it reads KPREVRKIKPVE. Residues 333–342 show a composition bias toward low complexity; the sequence is STVATAASPA. The span at 344–356 shows a compositional bias: basic and acidic residues; the sequence is EEPKAQAAPEKEA. The span at 410-425 shows a compositional bias: acidic residues; that stretch reads LEEDDEDDEEDGEPPY. Residues 417 to 494 are interaction with protein phosphatase 1; that stretch reads DEEDGEPPYE…LEKRVERLEL (78 aa). Ser438 is modified (phosphoserine). The PP1-binding motif motif lies at 447-451; the sequence is RKIHF. The interval 480–525 is interaction with RGS2; the sequence is SAEYELEKRVERLELFPVELEKDSEGLGISIIGMGAGADMGLEKLG. The region spanning 496-584 is the PDZ domain; it reads PVELEKDSEG…RVRFMIGRER (89 aa). The tract at residues 595-816 is interaction with TGN38; that stretch reads IQQTLEQERW…NLQTLRNSNS (222 aa). The residue at position 658 (Ser658) is a Phosphoserine. Positions 671-788 form a coiled coil; sequence FKELQIKHAV…QRRVLEESEL (118 aa).

Interacts with DCLK2. Possibly exists as a homodimer, homotrimer or a homotetramer. Interacts with F-actin, PPP1CA, neurabin-1, TGN38 and D(2) dopamine receptor. Interacts with RGS1, RGS2, RGS4, RGS19 and ADRA1B, ADRA2A, ADRA2B, ADRA2C, CDKN2A, PPP1R2, RASGFR1 and TIAM1. Interacts (via C-terminus) with SPATA13 (via C-terminal tail). Interacts with ADRA2B. In terms of processing, stimulation of D1 (but not D2) dopamine receptors induces Ser-94 phosphorylation. Dephosphorylation of Ser-94 is mediated mainly by PP1 and to a lesser extent by PP2A. Phosphorylation of spinophilin disrupts its association with F-actin, but does not affect its binding to PP1.

It localises to the cytoplasm. The protein resides in the cytoskeleton. It is found in the nucleus. Its subcellular location is the cell projection. The protein localises to the dendritic spine. It localises to the postsynaptic density. The protein resides in the synapse. It is found in the cell junction. Its subcellular location is the adherens junction. The protein localises to the cell membrane. It localises to the lamellipodium. The protein resides in the filopodium. It is found in the ruffle membrane. In terms of biological role, seems to act as a scaffold protein in multiple signaling pathways. Modulates excitatory synaptic transmission and dendritic spine morphology. Binds to actin filaments (F-actin) and shows cross-linking activity. Binds along the sides of the F-actin. May play an important role in linking the actin cytoskeleton to the plasma membrane at the synaptic junction. Believed to target protein phosphatase 1/PP1 to dendritic spines, which are rich in F-actin, and regulates its specificity toward ion channels and other substrates, such as AMPA-type and NMDA-type glutamate receptors. Plays a role in regulation of G-protein coupled receptor signaling, including dopamine D2 receptors and alpha-adrenergic receptors. May establish a signaling complex for dopaminergic neurotransmission through D2 receptors by linking receptors downstream signaling molecules and the actin cytoskeleton. Binds to ADRA1B and RGS2 and mediates regulation of ADRA1B signaling. May confer to Rac signaling specificity by binding to both, RacGEFs and Rac effector proteins. Probably regulates p70 S6 kinase activity by forming a complex with TIAM1. Required for hepatocyte growth factor (HGF)-induced cell migration. The chain is Neurabin-2 (PPP1R9B) from Homo sapiens (Human).